Reading from the N-terminus, the 178-residue chain is MASSMISSPAVTTVNRAGAGMVAPFTGLKSMAGLPTRKTNNDITSIASNGGRVQCMQVWPPVGKKKFETLSYLPDLDDAQLAKEVEYLLRKGWIPCLEFELEHGFVYREHNRSLGYYDGRYWTMWKLPMFGCTDASQVLKELQEAKTAYPNGFIRIIGFDNVRQVQCISFIAYKPPSF.

The transit peptide at 1-54 (MASSMISSPAVTTVNRAGAGMVAPFTGLKSMAGLPTRKTNNDITSIASNGGRVQ) directs the protein to the chloroplast.

This sequence belongs to the RuBisCO small chain family. As to quaternary structure, heterohexadecamer of 8 large and 8 small subunits.

The protein localises to the plastid. The protein resides in the chloroplast. Functionally, ruBisCO catalyzes two reactions: the carboxylation of D-ribulose 1,5-bisphosphate, the primary event in carbon dioxide fixation, as well as the oxidative fragmentation of the pentose substrate. Both reactions occur simultaneously and in competition at the same active site. Although the small subunit is not catalytic it is essential for maximal activity. The chain is Ribulose bisphosphate carboxylase small subunit, chloroplastic 2 from Glycine max (Soybean).